The chain runs to 306 residues: UDP-N-acetylenolpyruvoylglucosamine reductase (306 aa).

An FAD-binding PCMH-type domain is found at 29 to 193; that stretch reads RVGGPADWLF…IRASLRGTPD (165 aa). Arg173 is a catalytic residue. The Proton donor role is filled by Ser222. Glu292 is an active-site residue.

Belongs to the MurB family. FAD serves as cofactor.

The protein resides in the cytoplasm. The enzyme catalyses UDP-N-acetyl-alpha-D-muramate + NADP(+) = UDP-N-acetyl-3-O-(1-carboxyvinyl)-alpha-D-glucosamine + NADPH + H(+). It functions in the pathway cell wall biogenesis; peptidoglycan biosynthesis. Cell wall formation. This Gluconobacter oxydans (strain 621H) (Gluconobacter suboxydans) protein is UDP-N-acetylenolpyruvoylglucosamine reductase.